We begin with the raw amino-acid sequence, 269 residues long: Subtilisin BL (269 aa).

Residue glutamine 2 participates in Ca(2+) binding. The region spanning 5-268 is the Peptidase S8 domain; that stretch reads PWGISRVQAP…SGLVNAEAAT (264 aa). Aspartate 32 (charge relay system) is an active-site residue. Position 40 (aspartate 40) interacts with Ca(2+). The active-site Charge relay system is the histidine 62. Positions 73, 75, 77, 79, 163, 165, and 168 each coordinate Ca(2+). The Charge relay system role is filled by serine 215.

Belongs to the peptidase S8 family. Requires Ca(2+) as cofactor.

It localises to the secreted. It carries out the reaction Hydrolysis of proteins with broad specificity for peptide bonds, and a preference for a large uncharged residue in P1. Hydrolyzes peptide amides.. Functionally, subtilisin is an extracellular alkaline serine protease, it catalyzes the hydrolysis of proteins and peptide amides. The chain is Subtilisin BL from Lederbergia lenta (Bacillus lentus).